The chain runs to 264 residues: Thymidylate synthase (264 aa).

R21 is a binding site for dUMP. (6R)-5,10-methylene-5,6,7,8-tetrahydrofolate is bound at residue H51. DUMP is bound at residue 126–127 (RR). Catalysis depends on C146, which acts as the Nucleophile. DUMP is bound by residues 166-169 (RSAD), N177, and 207-209 (HIY). D169 provides a ligand contact to (6R)-5,10-methylene-5,6,7,8-tetrahydrofolate. A263 provides a ligand contact to (6R)-5,10-methylene-5,6,7,8-tetrahydrofolate.

It belongs to the thymidylate synthase family. Bacterial-type ThyA subfamily. Homodimer.

The protein localises to the cytoplasm. The catalysed reaction is dUMP + (6R)-5,10-methylene-5,6,7,8-tetrahydrofolate = 7,8-dihydrofolate + dTMP. Its pathway is pyrimidine metabolism; dTTP biosynthesis. Its function is as follows. Catalyzes the reductive methylation of 2'-deoxyuridine-5'-monophosphate (dUMP) to 2'-deoxythymidine-5'-monophosphate (dTMP) while utilizing 5,10-methylenetetrahydrofolate (mTHF) as the methyl donor and reductant in the reaction, yielding dihydrofolate (DHF) as a by-product. This enzymatic reaction provides an intracellular de novo source of dTMP, an essential precursor for DNA biosynthesis. The polypeptide is Thymidylate synthase (Parabacteroides distasonis (strain ATCC 8503 / DSM 20701 / CIP 104284 / JCM 5825 / NCTC 11152)).